The primary structure comprises 144 residues: Putative sugar phosphate isomerase RC0402 (144 aa).

Histidine 12 is a substrate binding site. The active-site Proton donor is the histidine 101. Position 135 (arginine 135) interacts with substrate.

It belongs to the LacAB/RpiB family.

In Rickettsia conorii (strain ATCC VR-613 / Malish 7), this protein is Putative sugar phosphate isomerase RC0402.